Here is a 55-residue protein sequence, read N- to C-terminus: Large ribosomal subunit protein bL33 (55 aa).

Belongs to the bacterial ribosomal protein bL33 family.

This Roseobacter denitrificans (strain ATCC 33942 / OCh 114) (Erythrobacter sp. (strain OCh 114)) protein is Large ribosomal subunit protein bL33.